A 221-amino-acid chain; its full sequence is GTP-binding nuclear protein Ran-1 (221 aa).

One can recognise a Small GTPase Ran-type domain in the interval 10–174; sequence DYPSFKLVIV…LYLARKLAGD (165 aa). Residue 21–28 coordinates GTP; the sequence is DGGTGKTT. The interval 40–48 is switch-I; the sequence is KKYEPTIGV. GTP contacts are provided by residues G71, 125–128, and 153–155; these read NKVD and SAK. The segment at 71 to 87 is switch-II; sequence GQEKFGGLRDGYYIHGQ.

This sequence belongs to the small GTPase superfamily. Ran family. In terms of assembly, found in a nuclear export complex with RanGTP, exportin and pre-miRNA. Interacts with RANBP1A and RANBP1B. Interacts with TRN1. Interacts with ATX1. Interacts with KPNB1. Binds to XPO1. Interacts with MOS14. Binds to NTF2B.

The protein resides in the nucleus. GTP-binding protein involved in nucleocytoplasmic transport. Required for the import of protein into the nucleus and also for RNA export. Involved in chromatin condensation and control of cell cycle. In Arabidopsis thaliana (Mouse-ear cress), this protein is GTP-binding nuclear protein Ran-1 (RAN1).